An 834-amino-acid polypeptide reads, in one-letter code: Periplasmic nitrate reductase (834 aa).

Positions 1–32 (MTEPKIDRRQLLKLEAAAIAAAAAGMPTVARA) form a signal peptide, tat-type signal. One can recognise a 4Fe-4S Mo/W bis-MGD-type domain in the interval 44-100 (LKWDKAACRFCGTGCSVMVATKDNRVVATHGDIKAEVNRGLNCVKGYFLSKIMYGHD). C51, C54, C58, and C86 together coordinate [4Fe-4S] cluster. Residues K88, Q155, N180, C184, 217-224 (WGSNMAEM), 248-252 (STFEH), 267-269 (QTD), M378, Q382, N488, 514-515 (SD), K537, D564, and 724-733 (TGRVVEHWHS) contribute to the Mo-bis(molybdopterin guanine dinucleotide) site. W800 contributes to the substrate binding site. The Mo-bis(molybdopterin guanine dinucleotide) site is built by N808 and K825.

It belongs to the prokaryotic molybdopterin-containing oxidoreductase family. NasA/NapA/NarB subfamily. In terms of assembly, component of the periplasmic nitrate reductase NapAB complex composed of NapA and NapB. Requires [4Fe-4S] cluster as cofactor. The cofactor is Mo-bis(molybdopterin guanine dinucleotide). In terms of processing, predicted to be exported by the Tat system. The position of the signal peptide cleavage has not been experimentally proven.

The protein localises to the periplasm. The catalysed reaction is 2 Fe(II)-[cytochrome] + nitrate + 2 H(+) = 2 Fe(III)-[cytochrome] + nitrite + H2O. Functionally, catalytic subunit of the periplasmic nitrate reductase complex NapAB. Receives electrons from NapB and catalyzes the reduction of nitrate to nitrite. The chain is Periplasmic nitrate reductase from Bradyrhizobium sp. (strain ORS 278).